The sequence spans 64 residues: Kappa-lycotoxin-Os1a (64 aa).

Cystine bridges form between Cys10–Cys26, Cys17–Cys56, Cys19–Cys42, and Cys28–Cys40.

Belongs to the neurotoxin 04 (omega-agtx) family. 01 (type I omega-agtx) subfamily. As to expression, expressed by the venom gland.

The protein localises to the secreted. Its function is as follows. Insecticidal to house crickets. It induces an excitatory slow-onset impact that leads to irreversible spastic paralysis. It also modifies human voltage-gated potassium channel Kv1.5/KCNA5. Most likely, it binds to the voltage-sensing domain of the channel, suggesting it does not block the pore but prevents its opening at physiological membrane potentials. The recombinant peptide binds to the channel in an irreversible manner and slows down the hKv1.5 current activation kinetics. It is not toxic to mice, when intracranially injected (at 0.5 ug/g mouse). The protein is Kappa-lycotoxin-Os1a of Oculicosa supermirabilis (Central Asian wolf-spider).